Consider the following 562-residue polypeptide: Formate--tetrahydrofolate ligase (562 aa).

An ATP-binding site is contributed by 71–78 (TPAGEGKS).

Belongs to the formate--tetrahydrofolate ligase family.

It carries out the reaction (6S)-5,6,7,8-tetrahydrofolate + formate + ATP = (6R)-10-formyltetrahydrofolate + ADP + phosphate. It functions in the pathway one-carbon metabolism; tetrahydrofolate interconversion. The chain is Formate--tetrahydrofolate ligase from Bacillus anthracis (strain A0248).